Reading from the N-terminus, the 238-residue chain is Large ribosomal subunit protein uL1 (238 aa).

It belongs to the universal ribosomal protein uL1 family. Part of the 50S ribosomal subunit.

Its function is as follows. Binds directly to 23S rRNA. The L1 stalk is quite mobile in the ribosome, and is involved in E site tRNA release. Protein L1 is also a translational repressor protein, it controls the translation of the L11 operon by binding to its mRNA. This Salinispora arenicola (strain CNS-205) protein is Large ribosomal subunit protein uL1.